A 271-amino-acid polypeptide reads, in one-letter code: Tryptophan synthase alpha chain (271 aa).

Catalysis depends on proton acceptor residues Glu-56 and Asp-67.

This sequence belongs to the TrpA family. In terms of assembly, tetramer of two alpha and two beta chains.

The catalysed reaction is (1S,2R)-1-C-(indol-3-yl)glycerol 3-phosphate + L-serine = D-glyceraldehyde 3-phosphate + L-tryptophan + H2O. It functions in the pathway amino-acid biosynthesis; L-tryptophan biosynthesis; L-tryptophan from chorismate: step 5/5. Its function is as follows. The alpha subunit is responsible for the aldol cleavage of indoleglycerol phosphate to indole and glyceraldehyde 3-phosphate. This chain is Tryptophan synthase alpha chain, found in Mycolicibacterium paratuberculosis (strain ATCC BAA-968 / K-10) (Mycobacterium paratuberculosis).